The sequence spans 275 residues: Dermonecrotic toxin SpaSicTox-betaIIA2 (275 aa).

His5 is an active-site residue. Positions 25 and 27 each coordinate Mg(2+). His41 serves as the catalytic Nucleophile. 2 disulfide bridges follow: Cys45–Cys51 and Cys47–Cys190. Asp85 lines the Mg(2+) pocket.

This sequence belongs to the arthropod phospholipase D family. Class II subfamily. The cofactor is Mg(2+). Expressed by the venom gland.

It localises to the secreted. The enzyme catalyses an N-(acyl)-sphingosylphosphocholine = an N-(acyl)-sphingosyl-1,3-cyclic phosphate + choline. It catalyses the reaction an N-(acyl)-sphingosylphosphoethanolamine = an N-(acyl)-sphingosyl-1,3-cyclic phosphate + ethanolamine. The catalysed reaction is a 1-acyl-sn-glycero-3-phosphocholine = a 1-acyl-sn-glycero-2,3-cyclic phosphate + choline. It carries out the reaction a 1-acyl-sn-glycero-3-phosphoethanolamine = a 1-acyl-sn-glycero-2,3-cyclic phosphate + ethanolamine. Dermonecrotic toxins cleave the phosphodiester linkage between the phosphate and headgroup of certain phospholipids (sphingolipid and lysolipid substrates), forming an alcohol (often choline) and a cyclic phosphate. This toxin acts on sphingomyelin (SM). It may also act on ceramide phosphoethanolamine (CPE), lysophosphatidylcholine (LPC) and lysophosphatidylethanolamine (LPE), but not on lysophosphatidylserine (LPS), and lysophosphatidylglycerol (LPG). It acts by transphosphatidylation, releasing exclusively cyclic phosphate products as second products. Induces dermonecrosis, hemolysis, increased vascular permeability, edema, inflammatory response, and platelet aggregation. The polypeptide is Dermonecrotic toxin SpaSicTox-betaIIA2 (Sicarius patagonicus (Six-eyed sand spider)).